The following is a 106-amino-acid chain: MRNQTKQHLEQLQITMQQLNLWQTMPPAAEAFLSEEPFSIDTMSAEEWLQWVFIPRMQALLESGSALPNKIAISPYIEEAMKEFNELQQLLTPLVALEELXNNNEC.

It to the N-terminal of E.carotovora exoenzyme regulation regulon ORF1. The C-terminal part is colinear with YqcB. To E.coli YqcC.

This is an uncharacterized protein from Haemophilus influenzae (strain ATCC 51907 / DSM 11121 / KW20 / Rd).